A 308-amino-acid polypeptide reads, in one-letter code: tRNA pseudouridine synthase B (308 aa).

Residue D46 is the Nucleophile of the active site.

This sequence belongs to the pseudouridine synthase TruB family. Type 1 subfamily.

The catalysed reaction is uridine(55) in tRNA = pseudouridine(55) in tRNA. Functionally, responsible for synthesis of pseudouridine from uracil-55 in the psi GC loop of transfer RNAs. The polypeptide is tRNA pseudouridine synthase B (Marinomonas sp. (strain MWYL1)).